Reading from the N-terminus, the 199-residue chain is LexA repressor (199 aa).

Positions 28–47 (IRDIAKHFKLTPRGAHIHVI) form a DNA-binding region, H-T-H motif. Residues S120 and K157 each act as for autocatalytic cleavage activity in the active site.

Belongs to the peptidase S24 family. As to quaternary structure, homodimer.

The enzyme catalyses Hydrolysis of Ala-|-Gly bond in repressor LexA.. Its function is as follows. Represses a number of genes involved in the response to DNA damage (SOS response), including recA and lexA. In the presence of single-stranded DNA, RecA interacts with LexA causing an autocatalytic cleavage which disrupts the DNA-binding part of LexA, leading to derepression of the SOS regulon and eventually DNA repair. The sequence is that of LexA repressor from Thermosipho melanesiensis (strain DSM 12029 / CIP 104789 / BI429).